We begin with the raw amino-acid sequence, 428 residues long: Kynureninase (428 aa).

Pyridoxal 5'-phosphate-binding positions include Thr104, Thr105, 132-135 (FPSD), Asp213, His216, and Tyr238. Lys239 is subject to N6-(pyridoxal phosphate)lysine. Positions 267 and 295 each coordinate pyridoxal 5'-phosphate.

This sequence belongs to the kynureninase family. Homodimer. Requires pyridoxal 5'-phosphate as cofactor.

The catalysed reaction is L-kynurenine + H2O = anthranilate + L-alanine + H(+). The enzyme catalyses 3-hydroxy-L-kynurenine + H2O = 3-hydroxyanthranilate + L-alanine + H(+). It participates in amino-acid degradation; L-kynurenine degradation; L-alanine and anthranilate from L-kynurenine: step 1/1. The protein operates within cofactor biosynthesis; NAD(+) biosynthesis; quinolinate from L-kynurenine: step 2/3. Its function is as follows. Catalyzes the cleavage of L-kynurenine (L-Kyn) and L-3-hydroxykynurenine (L-3OHKyn) into anthranilic acid (AA) and 3-hydroxyanthranilic acid (3-OHAA), respectively. The sequence is that of Kynureninase from Bacillus cereus (strain ATCC 10987 / NRS 248).